We begin with the raw amino-acid sequence, 202 residues long: Dephospho-CoA kinase (202 aa).

Residues K6–L202 enclose the DPCK domain. ATP is bound at residue S14 to E19.

This sequence belongs to the CoaE family.

It localises to the cytoplasm. It carries out the reaction 3'-dephospho-CoA + ATP = ADP + CoA + H(+). The protein operates within cofactor biosynthesis; coenzyme A biosynthesis; CoA from (R)-pantothenate: step 5/5. Functionally, catalyzes the phosphorylation of the 3'-hydroxyl group of dephosphocoenzyme A to form coenzyme A. This Chlamydia abortus (strain DSM 27085 / S26/3) (Chlamydophila abortus) protein is Dephospho-CoA kinase.